Consider the following 1168-residue polypeptide: Probable pre-mRNA-splicing factor ATP-dependent RNA helicase DEAH5 (1168 aa).

The segment at 76 to 206 is disordered; the sequence is IYPPKPKSEK…KDEYVEEDKG (131 aa). Composition is skewed to basic and acidic residues over residues 81–172 and 180–206; these read PKSE…DRRS and GRGDGGEGEDRRRDRRAKDEYVEEDKG. Residues 214-283 enclose the S1 motif domain; that stretch reads YQVYKGRVTR…SSDKYSLSMR (70 aa). A disordered region spans residues 289 to 326; it reads TGRDLIPLRKPSDEDDSSRSNPSYRTKDGQVTKTGISG. Residue S411 is modified to Phosphoserine. Positions 525–688 constitute a Helicase ATP-binding domain; it reads IQAVHDNQVL…FFNCNIFTIP (164 aa). ATP is bound at residue 538–545; that stretch reads GETGSGKT. Positions 635 to 638 match the DEAH box motif; the sequence is DEAH. In terms of domain architecture, Helicase C-terminal spans 706-886; that stretch reads YLDAALITVL…MTTLTMKAMG (181 aa).

It belongs to the DEAD box helicase family. DEAH subfamily. PRP22 sub-subfamily.

It localises to the nucleus. The enzyme catalyses ATP + H2O = ADP + phosphate + H(+). Functionally, may be involved in pre-mRNA splicing. The protein is Probable pre-mRNA-splicing factor ATP-dependent RNA helicase DEAH5 of Arabidopsis thaliana (Mouse-ear cress).